Reading from the N-terminus, the 237-residue chain is tRNA1(Val) (adenine(37)-N6)-methyltransferase (237 aa).

It belongs to the methyltransferase superfamily. tRNA (adenine-N(6)-)-methyltransferase family.

The protein resides in the cytoplasm. The catalysed reaction is adenosine(37) in tRNA1(Val) + S-adenosyl-L-methionine = N(6)-methyladenosine(37) in tRNA1(Val) + S-adenosyl-L-homocysteine + H(+). Its function is as follows. Specifically methylates the adenine in position 37 of tRNA(1)(Val) (anticodon cmo5UAC). The protein is tRNA1(Val) (adenine(37)-N6)-methyltransferase of Bacteroides fragilis (strain YCH46).